We begin with the raw amino-acid sequence, 486 residues long: Cysteine--tRNA ligase (486 aa).

Cys-29 lines the Zn(2+) pocket. Positions Val-31–His-41 match the 'HIGH' region motif. Cys-214, His-239, and Glu-243 together coordinate Zn(2+). The short motif at Lys-271 to Ser-275 is the 'KMSKS' region element. ATP is bound at residue Lys-274.

Belongs to the class-I aminoacyl-tRNA synthetase family. Monomer. It depends on Zn(2+) as a cofactor.

The protein resides in the cytoplasm. It carries out the reaction tRNA(Cys) + L-cysteine + ATP = L-cysteinyl-tRNA(Cys) + AMP + diphosphate. The sequence is that of Cysteine--tRNA ligase from Nostoc sp. (strain PCC 7120 / SAG 25.82 / UTEX 2576).